Consider the following 276-residue polypeptide: MLLRFTKMHGLGNDFMVLDLVSQHAHIQPKHAKQWGDRHTGIGFDQLLIVEAPNNPEVDFRYRIFNADGSEVEQCGNGARCFARFVLDKRLTAKKRIRVETKSGIIVLDVQNDGQVSVDMGPPRFIPAEIPFVADAQALSYPLEVDGQLHSIAAVSMGNPHAVLRVDDVRTAPVHELGPKIENHPRFPQRVNAGFIQVIDRHRANLRVWERGAGETQACGTGACAAAVAAISQGWMDSPVSLDLPGGRLHIEWAGPGKPVLMTGPAVRVYEGQVRL.

Substrate is bound by residues N13, Q46, and N66. The active-site Proton donor is C75. Substrate is bound by residues 76 to 77 (GN), N159, N192, and 210 to 211 (ER). Catalysis depends on C219, which acts as the Proton acceptor. Position 220 to 221 (220 to 221 (GT)) interacts with substrate.

It belongs to the diaminopimelate epimerase family. Homodimer.

It is found in the cytoplasm. It carries out the reaction (2S,6S)-2,6-diaminopimelate = meso-2,6-diaminopimelate. The protein operates within amino-acid biosynthesis; L-lysine biosynthesis via DAP pathway; DL-2,6-diaminopimelate from LL-2,6-diaminopimelate: step 1/1. Functionally, catalyzes the stereoinversion of LL-2,6-diaminopimelate (L,L-DAP) to meso-diaminopimelate (meso-DAP), a precursor of L-lysine and an essential component of the bacterial peptidoglycan. This is Diaminopimelate epimerase from Pseudomonas putida (strain GB-1).